A 184-amino-acid chain; its full sequence is Putative F-box protein At4g22420 (184 aa).

Residues 1–46 (MAECPTDLINEMFLRLRATTLKKCRVLSKPCFSLIDSPEKRVIERS) form the F-box domain. Positions 68-126 (DDDEEEGNELKKSQARRNGVAKGEGNGNKVNGEAQEEVDDEEDDDDDASKGRGKHSRHV) are disordered. Low complexity predominate over residues 85–100 (NGVAKGEGNGNKVNGE). Over residues 101-114 (AQEEVDDEEDDDDD) the composition is skewed to acidic residues.

This chain is Putative F-box protein At4g22420, found in Arabidopsis thaliana (Mouse-ear cress).